The following is a 173-amino-acid chain: Ribosome maturation factor RimM (173 aa).

In terms of domain architecture, PRC barrel spans 93 to 166 (EDEYLVSDMI…KMLVDTIEGM (74 aa)).

This sequence belongs to the RimM family. In terms of assembly, binds ribosomal protein uS19.

The protein localises to the cytoplasm. Functionally, an accessory protein needed during the final step in the assembly of 30S ribosomal subunit, possibly for assembly of the head region. Essential for efficient processing of 16S rRNA. May be needed both before and after RbfA during the maturation of 16S rRNA. It has affinity for free ribosomal 30S subunits but not for 70S ribosomes. The polypeptide is Ribosome maturation factor RimM (Fusobacterium nucleatum subsp. nucleatum (strain ATCC 25586 / DSM 15643 / BCRC 10681 / CIP 101130 / JCM 8532 / KCTC 2640 / LMG 13131 / VPI 4355)).